Reading from the N-terminus, the 86-residue chain is Large ribosomal subunit protein bL27 (86 aa).

Belongs to the bacterial ribosomal protein bL27 family.

The sequence is that of Large ribosomal subunit protein bL27 from Xanthomonas axonopodis pv. citri (strain 306).